Reading from the N-terminus, the 204-residue chain is uncharacterized protein (204 aa).

Residues 47-108 (TDSSDDEGGA…EDSDEEGEGG (62 aa)) are disordered. The segment covering 49–106 (SSDDEGGASSGDEGEASSDDEGDASSDDEEEASSDGEGVVEDEETLDAEGEDSDEEGE) has biased composition (acidic residues).

The protein resides in the mitochondrion. This is an uncharacterized protein from Paramecium tetraurelia.